The sequence spans 199 residues: FMN-dependent NADH:quinone oxidoreductase (199 aa).

FMN contacts are provided by residues serine 10, 16 to 18 (SVS), and 96 to 99 (MYNF).

The protein belongs to the azoreductase type 1 family. Homodimer. It depends on FMN as a cofactor.

The catalysed reaction is 2 a quinone + NADH + H(+) = 2 a 1,4-benzosemiquinone + NAD(+). It catalyses the reaction N,N-dimethyl-1,4-phenylenediamine + anthranilate + 2 NAD(+) = 2-(4-dimethylaminophenyl)diazenylbenzoate + 2 NADH + 2 H(+). Its function is as follows. Quinone reductase that provides resistance to thiol-specific stress caused by electrophilic quinones. Also exhibits azoreductase activity. Catalyzes the reductive cleavage of the azo bond in aromatic azo compounds to the corresponding amines. The sequence is that of FMN-dependent NADH:quinone oxidoreductase from Azotobacter vinelandii (strain DJ / ATCC BAA-1303).